The chain runs to 381 residues: Hydrogenase nickel incorporation protein HupN (381 aa).

Topologically, residues 1–39 (MLPFSMTGLEKDHTRGVLILANAHRRSERSRTASCAGPA) are cytoplasmic. Residues 40–60 (VLFGGLITANIVAWAWAFALF) form a helical membrane-spanning segment. Residues 61–63 (ADR) are Periplasmic-facing. A helical transmembrane segment spans residues 64 to 84 (PVVMATALLAWVFGLRHAVDA). Residues 85-110 (DHIAAIDNVVRSLMQTGGTPRSAGLY) are Cytoplasmic-facing. Residues 111–131 (FALGHSSVVVVATMLLALGVV) traverse the membrane as a helical segment. The Periplasmic portion of the chain corresponds to 132–149 (SLGGDGLLKEIGSFIGAS). The helical transmembrane segment at 150–170 (VSALFLLVIAAINLAIFASLW) threads the bilayer. Over 171-215 (RTFRKAREQGIRDAAGLDALLAHRGILVRLLGPMFRLVTKPWHMY) the chain is Cytoplasmic. A helical membrane pass occupies residues 216–236 (PLGFLFGLGFDTATEIGLLSI). The Periplasmic portion of the chain corresponds to 237 to 243 (SASEAAR). The chain crosses the membrane as a helical span at residues 244-264 (GASLADVMVFPALFAAGMALV). Topologically, residues 265-292 (DTADSTLMVSAYRWAFVDPMRKLWYNLT) are cytoplasmic. The chain crosses the membrane as a helical span at residues 293–313 (ITGASVAVALFIGGIEALGLI). Residues 314–333 (GNRLDLSGGVWTLIDALNES) are Periplasmic-facing. Residues 334–354 (LANVGLAVIALFAIAWLLSIV) form a helical membrane-spanning segment. At 355 to 381 (LYRRLIAGSSGLADTEVLECADATEAV) the chain is on the cytoplasmic side.

The protein belongs to the NiCoT transporter (TC 2.A.52) family.

It localises to the cell inner membrane. Functionally, involved in nickel incorporation/metabolism into the hydrogenase apoprotein. The protein is Hydrogenase nickel incorporation protein HupN (hupN) of Bradyrhizobium diazoefficiens (strain JCM 10833 / BCRC 13528 / IAM 13628 / NBRC 14792 / USDA 110).